The following is a 501-amino-acid chain: Ribonuclease Y (501 aa).

The chain crosses the membrane as a helical span at residues 7 to 27 (LVVIALLGALTLLTAGHVLAL). The region spanning 190–256 (VVRAVPLPEE…RLTLEKLVAD (67 aa)) is the KH domain. Positions 316-409 (VLAHLVESAH…TQAADAISGG (94 aa)) constitute an HD domain.

The protein belongs to the RNase Y family.

Its subcellular location is the cell membrane. Functionally, endoribonuclease that initiates mRNA decay. This chain is Ribonuclease Y, found in Thermobifida fusca (strain YX).